The chain runs to 150 residues: MAGETSFKYIVRIAGVDIDGDLKLPYGLASIKGIGYTTAMAVIRMLGLDPEKKVGFLTEEEIRRLDEVLRDITQLGLPKWLYNRRKDYETGKDLHLIGSELIFYARRDIEREMKIGSWRGIRHKYGLKVRGQRTRTTGRLGMTIGVRKKR.

The protein belongs to the universal ribosomal protein uS13 family. As to quaternary structure, part of the 30S ribosomal subunit. Forms a loose heterodimer with protein S19. Forms two bridges to the 50S subunit in the 70S ribosome.

Its function is as follows. Located at the top of the head of the 30S subunit, it contacts several helices of the 16S rRNA. In the 70S ribosome it contacts the 23S rRNA (bridge B1a) and protein L5 of the 50S subunit (bridge B1b), connecting the 2 subunits; these bridges are implicated in subunit movement. The polypeptide is Small ribosomal subunit protein uS13 (Aeropyrum pernix (strain ATCC 700893 / DSM 11879 / JCM 9820 / NBRC 100138 / K1)).